We begin with the raw amino-acid sequence, 374 residues long: MPLLISPFAELDLIRQPEQQDEPLQAFDAADEYLLNHVAETGLSLQSRVLVLNDSFGALAASLASHATVVSSTDSFLAAQGLEKNLARNGMSYDAVPHIPASEPLSGPFDWVLIRVPKTLALLEEQLIRLQGQLAPGARVVAAAMVKHLPRSAGDLLEEYVGPVQASLAVKKARLLFATPQPMEVRTSPYPTRYRLDEPAIELLNHANVFCRDGLDIGTRAFLPYLPKNLGTARVADLGCGNGVLAIASALDNPQAHYTLVDESFMAVQSAAENWRATLGERVVEVRAADGLDTQEPDSLDVVLCNPPFHQQQVVGDFLAWRMFLQARAALVNGGALYIVGNRHLGYHTKLSRLFRGVEQVAATPKFVILKARK.

It belongs to the methyltransferase superfamily. RlmG family.

It is found in the cytoplasm. It catalyses the reaction guanosine(1835) in 23S rRNA + S-adenosyl-L-methionine = N(2)-methylguanosine(1835) in 23S rRNA + S-adenosyl-L-homocysteine + H(+). Specifically methylates the guanine in position 1835 (m2G1835) of 23S rRNA. This Pseudomonas savastanoi pv. phaseolicola (strain 1448A / Race 6) (Pseudomonas syringae pv. phaseolicola (strain 1448A / Race 6)) protein is Ribosomal RNA large subunit methyltransferase G.